A 433-amino-acid chain; its full sequence is Glutamate--tRNA ligase (433 aa).

The 'HIGH' region signature appears at 10–20; sequence PSPTGYLHIGG. The 'KMSKS' region signature appears at 211–215; that stretch reads KMSKR. Lys214 contacts ATP.

The protein belongs to the class-I aminoacyl-tRNA synthetase family. Glutamate--tRNA ligase type 1 subfamily. In terms of assembly, monomer.

The protein resides in the cytoplasm. The enzyme catalyses tRNA(Glu) + L-glutamate + ATP = L-glutamyl-tRNA(Glu) + AMP + diphosphate. In terms of biological role, catalyzes the attachment of glutamate to tRNA(Glu) in a two-step reaction: glutamate is first activated by ATP to form Glu-AMP and then transferred to the acceptor end of tRNA(Glu). The chain is Glutamate--tRNA ligase from Akkermansia muciniphila (strain ATCC BAA-835 / DSM 22959 / JCM 33894 / BCRC 81048 / CCUG 64013 / CIP 107961 / Muc).